The primary structure comprises 360 residues: Peptide chain release factor 1 (360 aa).

Residue Q236 is modified to N5-methylglutamine.

It belongs to the prokaryotic/mitochondrial release factor family. In terms of processing, methylated by PrmC. Methylation increases the termination efficiency of RF1.

Its subcellular location is the cytoplasm. Peptide chain release factor 1 directs the termination of translation in response to the peptide chain termination codons UAG and UAA. This Lactiplantibacillus plantarum (strain ATCC BAA-793 / NCIMB 8826 / WCFS1) (Lactobacillus plantarum) protein is Peptide chain release factor 1.